We begin with the raw amino-acid sequence, 1296 residues long: Phosphoribosylformylglycinamidine synthase (1296 aa).

A disordered region spans residues 304–323 (WPGAATGSGGEIRDEGATGR). ATP contacts are provided by residues 306-317 (GAATGSGGEIRD) and alanine 677. Mg(2+) is bound by residues aspartate 678, glutamate 717, asparagine 721, and aspartate 885. Serine 887 lines the ATP pocket. A compositionally biased stretch (basic and acidic residues) spans 1000 to 1013 (PDCADQEHQAKQDE). The segment at 1000-1019 (PDCADQEHQAKQDESDPGLN) is disordered. Residues 1043–1296 (VAVLREQGVN…MFRNARKQLG (254 aa)) enclose the Glutamine amidotransferase type-1 domain. Cysteine 1136 (nucleophile) is an active-site residue. Residues histidine 1261 and glutamate 1263 contribute to the active site.

This sequence in the N-terminal section; belongs to the FGAMS family. As to quaternary structure, monomer.

It localises to the cytoplasm. It catalyses the reaction N(2)-formyl-N(1)-(5-phospho-beta-D-ribosyl)glycinamide + L-glutamine + ATP + H2O = 2-formamido-N(1)-(5-O-phospho-beta-D-ribosyl)acetamidine + L-glutamate + ADP + phosphate + H(+). It participates in purine metabolism; IMP biosynthesis via de novo pathway; 5-amino-1-(5-phospho-D-ribosyl)imidazole from N(2)-formyl-N(1)-(5-phospho-D-ribosyl)glycinamide: step 1/2. Functionally, phosphoribosylformylglycinamidine synthase involved in the purines biosynthetic pathway. Catalyzes the ATP-dependent conversion of formylglycinamide ribonucleotide (FGAR) and glutamine to yield formylglycinamidine ribonucleotide (FGAM) and glutamate. In Yersinia pestis bv. Antiqua (strain Antiqua), this protein is Phosphoribosylformylglycinamidine synthase.